Consider the following 425-residue polypeptide: Serine--tRNA ligase (425 aa).

229–231 lines the L-serine pocket; the sequence is TSE. ATP is bound by residues 259–261 and V275; that span reads RKE. E282 is a binding site for L-serine. ATP is bound at residue 349 to 352; it reads EVTS. T384 lines the L-serine pocket.

The protein belongs to the class-II aminoacyl-tRNA synthetase family. Type-1 seryl-tRNA synthetase subfamily. Homodimer. The tRNA molecule binds across the dimer.

The protein resides in the cytoplasm. The enzyme catalyses tRNA(Ser) + L-serine + ATP = L-seryl-tRNA(Ser) + AMP + diphosphate + H(+). The catalysed reaction is tRNA(Sec) + L-serine + ATP = L-seryl-tRNA(Sec) + AMP + diphosphate + H(+). It participates in aminoacyl-tRNA biosynthesis; selenocysteinyl-tRNA(Sec) biosynthesis; L-seryl-tRNA(Sec) from L-serine and tRNA(Sec): step 1/1. Catalyzes the attachment of serine to tRNA(Ser). Is also able to aminoacylate tRNA(Sec) with serine, to form the misacylated tRNA L-seryl-tRNA(Sec), which will be further converted into selenocysteinyl-tRNA(Sec). The polypeptide is Serine--tRNA ligase (Borrelia garinii subsp. bavariensis (strain ATCC BAA-2496 / DSM 23469 / PBi) (Borreliella bavariensis)).